Reading from the N-terminus, the 123-residue chain is UPF0102 protein PFL_5073 (123 aa).

Belongs to the UPF0102 family.

The sequence is that of UPF0102 protein PFL_5073 from Pseudomonas fluorescens (strain ATCC BAA-477 / NRRL B-23932 / Pf-5).